Reading from the N-terminus, the 300-residue chain is Bifunctional protein FolD (300 aa).

NADP(+)-binding positions include 169–171 (GRG), Ser196, and Ile237.

Belongs to the tetrahydrofolate dehydrogenase/cyclohydrolase family. As to quaternary structure, homodimer.

The enzyme catalyses (6R)-5,10-methylene-5,6,7,8-tetrahydrofolate + NADP(+) = (6R)-5,10-methenyltetrahydrofolate + NADPH. The catalysed reaction is (6R)-5,10-methenyltetrahydrofolate + H2O = (6R)-10-formyltetrahydrofolate + H(+). It participates in one-carbon metabolism; tetrahydrofolate interconversion. Catalyzes the oxidation of 5,10-methylenetetrahydrofolate to 5,10-methenyltetrahydrofolate and then the hydrolysis of 5,10-methenyltetrahydrofolate to 10-formyltetrahydrofolate. The chain is Bifunctional protein FolD from Clavibacter sepedonicus (Clavibacter michiganensis subsp. sepedonicus).